We begin with the raw amino-acid sequence, 597 residues long: UvrABC system protein C (597 aa).

The 78-residue stretch at 14–91 (KKPGCYLWKD…INQYQPRFNL (78 aa)) folds into the GIY-YIG domain.

The protein belongs to the UvrC family. As to quaternary structure, interacts with UvrB in an incision complex.

The protein localises to the cytoplasm. The UvrABC repair system catalyzes the recognition and processing of DNA lesions. UvrC both incises the 5' and 3' sides of the lesion. The N-terminal half is responsible for the 3' incision and the C-terminal half is responsible for the 5' incision. The protein is UvrABC system protein C of Mycoplasma genitalium (strain ATCC 33530 / DSM 19775 / NCTC 10195 / G37) (Mycoplasmoides genitalium).